The following is an 89-amino-acid chain: DNA/RNA-binding protein Alba (89 aa).

Lys11 is subject to N6-acetyllysine.

The protein belongs to the histone-like Alba family. Post-translationally, acetylated. Acetylation at Lys-11 decreases DNA-binding affinity.

It localises to the cytoplasm. The protein localises to the chromosome. Binds double-stranded DNA tightly but without sequence specificity. Involved in DNA compaction. The chain is DNA/RNA-binding protein Alba from Thermoplasma volcanium (strain ATCC 51530 / DSM 4299 / JCM 9571 / NBRC 15438 / GSS1).